We begin with the raw amino-acid sequence, 110 residues long: Iron-sulfur cluster assembly protein CyaY (110 aa).

The protein belongs to the frataxin family.

Its function is as follows. Involved in iron-sulfur (Fe-S) cluster assembly. May act as a regulator of Fe-S biogenesis. This chain is Iron-sulfur cluster assembly protein CyaY, found in Pseudomonas putida (strain GB-1).